The sequence spans 102 residues: Large ribosomal subunit protein bL21 (102 aa).

The span at arginine 79 to proline 91 shows a compositional bias: basic residues. Residues arginine 79–alanine 102 form a disordered region.

Belongs to the bacterial ribosomal protein bL21 family. In terms of assembly, part of the 50S ribosomal subunit. Contacts protein L20.

Its function is as follows. This protein binds to 23S rRNA in the presence of protein L20. This Staphylococcus epidermidis (strain ATCC 35984 / DSM 28319 / BCRC 17069 / CCUG 31568 / BM 3577 / RP62A) protein is Large ribosomal subunit protein bL21.